A 391-amino-acid chain; its full sequence is Tyrosine recombinase XerC-like (391 aa).

Residues 64 to 148 (VTLGDLMHTW…FLKTFFNYAV (85 aa)) form the Core-binding (CB) domain. Positions 175–384 (TEIETFSDEE…IPKQKTNAVE (210 aa)) constitute a Tyr recombinase domain. Active-site residues include Arg-210, Lys-244, His-335, Arg-338, and His-361. Tyr-371 (O-(3'-phospho-DNA)-tyrosine intermediate) is an active-site residue.

It belongs to the 'phage' integrase family.

The protein localises to the cytoplasm. In terms of biological role, site-specific tyrosine recombinase, which acts by catalyzing the cutting and rejoining of the recombining DNA molecules. The chain is Tyrosine recombinase XerC-like from Caldanaerobacter subterraneus subsp. tengcongensis (strain DSM 15242 / JCM 11007 / NBRC 100824 / MB4) (Thermoanaerobacter tengcongensis).